The primary structure comprises 291 residues: Lysosomal amino acid transporter 1 homolog (291 aa).

Topologically, residues 1 to 37 are lumenal; it reads MVWKKLGSRNFSSCPSGSIQWIWDVLGECAQDGWDEA. N-linked (GlcNAc...) asparagine glycosylation is present at N10. The 67-residue stretch at 34 to 100 folds into the PQ-loop 1 domain; sequence WDEASVGLGL…LADQLPLQTY (67 aa). A helical transmembrane segment spans residues 38–58; the sequence is SVGLGLISILCFAASTFPQFI. Topologically, residues 59 to 71 are cytoplasmic; the sequence is KAYKTGNMDQALS. The chain crosses the membrane as a helical span at residues 72 to 92; the sequence is LWFLLGWIGGDSCNLIGSFLA. Topologically, residues 93 to 98 are lumenal; sequence DQLPLQ. A helical transmembrane segment spans residues 99 to 119; that stretch reads TYTAVYYVLADLVMLTLYFYY. Over 120–134 the chain is Cytoplasmic; sequence KFRTRPSLLSAPINS. Residues 135–155 form a helical membrane-spanning segment; sequence VLLFLMGMACATPLLSAAGPV. The Lumenal portion of the chain corresponds to 156-182; it reads AAPREAFRGRALLSVESGSKPFTRQEV. A helical transmembrane segment spans residues 183–203; that stretch reads IGFVIGSISSVLYLLSRLPQI. Residues 184-243 form the PQ-loop 2 domain; sequence GFVIGSISSVLYLLSRLPQIRTNFLRKSTQGISYSLFALVMLGNTLYGLSVLLKNPEEGQ. Topologically, residues 204-214 are cytoplasmic; the sequence is RTNFLRKSTQG. The chain crosses the membrane as a helical span at residues 215–235; the sequence is ISYSLFALVMLGNTLYGLSVL. At 236-254 the chain is on the lumenal side; it reads LKNPEEGQSEGSYLLHHLP. The chain crosses the membrane as a helical span at residues 255–275; sequence WLVGSLGVLLLDTIISIQFLV. Topologically, residues 276 to 291 are cytoplasmic; the sequence is YRRSTAASELEPLLPS. Positions 288 to 289 match the Di-leucine motif motif; it reads LL.

It belongs to the laat-1 family.

It localises to the lysosome membrane. Amino acid transporter that specifically mediates the pH-dependent export of the cationic amino acids arginine, histidine and lysine from lysosomes. The sequence is that of Lysosomal amino acid transporter 1 homolog from Homo sapiens (Human).